The chain runs to 125 residues: Large ribosomal subunit protein bL20 (125 aa).

This sequence belongs to the bacterial ribosomal protein bL20 family.

Binds directly to 23S ribosomal RNA and is necessary for the in vitro assembly process of the 50S ribosomal subunit. It is not involved in the protein synthesizing functions of that subunit. The sequence is that of Large ribosomal subunit protein bL20 from Zymomonas mobilis subsp. mobilis (strain ATCC 31821 / ZM4 / CP4).